Reading from the N-terminus, the 346-residue chain is Heterogeneous nuclear ribonucleoprotein A1 (346 aa).

2 RRM domains span residues 23–123 and 114–191; these read RKIF…GVRE and KRLY…KGLS. 2 stretches are compositionally biased toward basic and acidic residues: residues 92-107 and 189-215; these read TVDPKRAVPRDDKNRS and GLSKDEMSKAQMNRDRETRGGRSRDGQ. 2 disordered regions span residues 92–111 and 189–346; these read TVDPKRAVPRDDKNRSESNV and GLSK…NRNY. Gly residues-rich tracts occupy residues 216–296 and 303–331; these read RGGY…GWGG and GGWGGPQQGGGGGGWGGQGQQQGGWGGQS. Low complexity predominate over residues 332-346; sequence GAQQWAHAQGGNRNY.

The protein resides in the nucleus. Its subcellular location is the chromosome. The protein localises to the telomere. Its function is as follows. This protein is a component of ribonucleosomes. Overexpression gradually increases telomere length, leading to increase lifespan. The polypeptide is Heterogeneous nuclear ribonucleoprotein A1 (Caenorhabditis elegans).